Here is a 641-residue protein sequence, read N- to C-terminus: Tetracycline resistance protein TetQ (641 aa).

One can recognise a tr-type G domain in the interval methionine 1–alanine 244. Residues alanine 10 to threonine 17, aspartate 74 to histidine 78, and asparagine 128 to aspartate 131 each bind GTP.

The protein belongs to the TRAFAC class translation factor GTPase superfamily. Classic translation factor GTPase family. TetM/TetO subfamily.

Abolishes the inhibitory effect of tetracyclin on protein synthesis by a non-covalent modification of the ribosomes. This chain is Tetracycline resistance protein TetQ (tetQ), found in Xylanibacter ruminicola (Prevotella ruminicola).